Consider the following 265-residue polypeptide: U6 snRNA phosphodiesterase 1 (265 aa).

The segment at 1–22 (MSLVCYESSSSGEDDDETISDN) is disordered. The active-site Proton acceptor is the His109. AMP is bound by residues 109 to 111 (HLS) and 195 to 201 (DFLLHIS). UMP is bound at residue 197–201 (LLHIS). The Proton donor role is filled by His199.

It belongs to the 2H phosphoesterase superfamily. USB1 family.

Its subcellular location is the nucleus. The catalysed reaction is a 3'-end uridylyl-uridine-RNA = a 3'-end 2',3'-cyclophospho-uridine-RNA + uridine. Its function is as follows. 3'-5' RNA exonuclease that trims the 3' end of oligo(U) tracts of the pre-U6 small nuclear RNA (snRNA) molecule, leading to the formation of a U6 snRNA 3' end-terminated with a 2',3'-cyclic phosphate.d. Participates in the U6 snRNA 3' end processing that prevents U6 snRNA degradation. This chain is U6 snRNA phosphodiesterase 1, found in Schizosaccharomyces pombe (strain 972 / ATCC 24843) (Fission yeast).